Here is a 905-residue protein sequence, read N- to C-terminus: Protein LONGIFOLIA 2 (905 aa).

Disordered stretches follow at residues 42-136, 232-268, 285-315, 432-585, 606-626, and 690-711; these read VSGG…GGLM, RLSLDSRSNSFRSPRADAARSSCPEEPATMTHRRSSS, DTEQRRENRFCDSPRPMSRVEPTALQRSRSV, STSP…SDSN, CDFPEQHTPKQRSPDFGIKQD, and VPFPQSNRGPMKPSSDHFECSP. Residues 65–74 show a composition bias toward basic and acidic residues; that stretch reads ESDKETERSS. Over residues 90–117 the composition is skewed to low complexity; sequence FESSSRPSFSSSPRSSSFSSAEVSTTAS. Positions 286 to 296 are enriched in basic and acidic residues; it reads TEQRRENRFCD. Polar residues-rich tracts occupy residues 432–461, 477–487, and 501–516; these read STSPLPQNVTLPNVKVGNSRQTRKVTSGKQ, LDSTKSNSPKT, and MTKSGRSQQHSVSPRT. The span at 566–581 shows a compositional bias: basic and acidic residues; sequence PDDRLSDARSDLRSLR.

Interacts (via C-terminus) with TON1A and TON1B.

Its subcellular location is the cytoplasm. It localises to the cytoskeleton. Functionally, in association with LNG1, regulates leaf morphology by promoting longitudinal polar cell elongation independently of ROT3. Associates with microtubules and recruits TON1A and TON1B to the cytoskeleton through its C-terminus. The sequence is that of Protein LONGIFOLIA 2 (LNG2) from Arabidopsis thaliana (Mouse-ear cress).